Consider the following 199-residue polypeptide: Large ribosomal subunit protein bL25 (199 aa).

It belongs to the bacterial ribosomal protein bL25 family. CTC subfamily. Part of the 50S ribosomal subunit; part of the 5S rRNA/L5/L18/L25 subcomplex. Contacts the 5S rRNA. Binds to the 5S rRNA independently of L5 and L18.

In terms of biological role, this is one of the proteins that binds to the 5S RNA in the ribosome where it forms part of the central protuberance. In Caldanaerobacter subterraneus subsp. tengcongensis (strain DSM 15242 / JCM 11007 / NBRC 100824 / MB4) (Thermoanaerobacter tengcongensis), this protein is Large ribosomal subunit protein bL25.